The sequence spans 417 residues: NADH-quinone oxidoreductase subunit D (417 aa).

The protein belongs to the complex I 49 kDa subunit family. In terms of assembly, NDH-1 is composed of 14 different subunits. Subunits NuoB, C, D, E, F, and G constitute the peripheral sector of the complex.

The protein localises to the cell inner membrane. The catalysed reaction is a quinone + NADH + 5 H(+)(in) = a quinol + NAD(+) + 4 H(+)(out). Its function is as follows. NDH-1 shuttles electrons from NADH, via FMN and iron-sulfur (Fe-S) centers, to quinones in the respiratory chain. The immediate electron acceptor for the enzyme in this species is believed to be ubiquinone. Couples the redox reaction to proton translocation (for every two electrons transferred, four hydrogen ions are translocated across the cytoplasmic membrane), and thus conserves the redox energy in a proton gradient. This is NADH-quinone oxidoreductase subunit D from Polaromonas naphthalenivorans (strain CJ2).